We begin with the raw amino-acid sequence, 227 residues long: Uracil-DNA glycosylase (227 aa).

Asp68 acts as the Proton acceptor in catalysis.

The protein belongs to the uracil-DNA glycosylase (UDG) superfamily. UNG family.

The protein resides in the cytoplasm. The catalysed reaction is Hydrolyzes single-stranded DNA or mismatched double-stranded DNA and polynucleotides, releasing free uracil.. In terms of biological role, excises uracil residues from the DNA which can arise as a result of misincorporation of dUMP residues by DNA polymerase or due to deamination of cytosine. The protein is Uracil-DNA glycosylase of Mycobacterium leprae (strain Br4923).